A 631-amino-acid chain; its full sequence is Pescadillo homolog (631 aa).

A BRCT domain is found at 321–414; it reads RLRTLFKGLK…QLLPTNDYFL (94 aa). Basic and acidic residues predominate over residues 428 to 442; it reads SKRDSYIPPEEKALH. Disordered regions lie at residues 428–471 and 489–560; these read SKRD…EADQ and YKKY…EVDE. A phosphoserine mark is found at serine 453 and serine 457. Composition is skewed to acidic residues over residues 453 to 471 and 498 to 525; these read SEEE…EADQ and VNED…EDVD. Positions 526-538 are enriched in basic and acidic residues; that stretch reads EQTKRKQQEKEKM. Basic residues predominate over residues 544–553; the sequence is KVHKVNKRQV. Residues 593–629 are a coiled coil; that stretch reads LRKKRRNIDADTKEAKKAAKREARKLAAEAAARAAKL.

It belongs to the pescadillo family.

It is found in the nucleus. The protein resides in the nucleolus. It localises to the nucleoplasm. Required for maturation of ribosomal RNAs and formation of the large ribosomal subunit. The polypeptide is Pescadillo homolog (Drosophila persimilis (Fruit fly)).